Consider the following 158-residue polypeptide: Transcription elongation factor GreA (158 aa).

This sequence belongs to the GreA/GreB family.

In terms of biological role, necessary for efficient RNA polymerase transcription elongation past template-encoded arresting sites. The arresting sites in DNA have the property of trapping a certain fraction of elongating RNA polymerases that pass through, resulting in locked ternary complexes. Cleavage of the nascent transcript by cleavage factors such as GreA or GreB allows the resumption of elongation from the new 3'terminus. GreA releases sequences of 2 to 3 nucleotides. This is Transcription elongation factor GreA from Yersinia pestis.